The sequence spans 116 residues: Peptidyl-tRNA hydrolase (116 aa).

This sequence belongs to the PTH2 family.

The protein resides in the cytoplasm. It carries out the reaction an N-acyl-L-alpha-aminoacyl-tRNA + H2O = an N-acyl-L-amino acid + a tRNA + H(+). In terms of biological role, the natural substrate for this enzyme may be peptidyl-tRNAs which drop off the ribosome during protein synthesis. The sequence is that of Peptidyl-tRNA hydrolase from Methanococcus maripaludis (strain C7 / ATCC BAA-1331).